Reading from the N-terminus, the 147-residue chain is Urease accessory protein UreE (147 aa).

This sequence belongs to the UreE family.

The protein localises to the cytoplasm. Functionally, involved in urease metallocenter assembly. Binds nickel. Probably functions as a nickel donor during metallocenter assembly. The sequence is that of Urease accessory protein UreE from Nostoc sp. (strain PCC 7120 / SAG 25.82 / UTEX 2576).